A 206-amino-acid polypeptide reads, in one-letter code: Inosine triphosphate pyrophosphatase (206 aa).

Position 21–26 (21–26 (TGNAKK)) interacts with ITP. E49 is a binding site for Mg(2+). Residues K61, 77-78 (DT), K94, 153-156 (FGWD), K176, and 181-182 (HR) each bind ITP.

This sequence belongs to the HAM1 NTPase family. In terms of assembly, homodimer. Mg(2+) is required as a cofactor. It depends on Mn(2+) as a cofactor.

The protein resides in the cytoplasm. The enzyme catalyses ITP + H2O = IMP + diphosphate + H(+). It catalyses the reaction dITP + H2O = dIMP + diphosphate + H(+). The catalysed reaction is XTP + H2O = XMP + diphosphate + H(+). In terms of biological role, pyrophosphatase that hydrolyzes non-canonical purine nucleotides such as inosine triphosphate (ITP), deoxyinosine triphosphate (dITP) or xanthosine 5'-triphosphate (XTP) to their respective monophosphate derivatives. The enzyme does not distinguish between the deoxy- and ribose forms. Probably excludes non-canonical purines from RNA and DNA precursor pools, thus preventing their incorporation into RNA and DNA and avoiding chromosomal lesions. The chain is Inosine triphosphate pyrophosphatase from Vitis vinifera (Grape).